Consider the following 328-residue polypeptide: Malate dehydrogenase (328 aa).

12–18 is a binding site for NAD(+); the sequence is GAAGQIG. Arg-95 and Arg-101 together coordinate substrate. NAD(+)-binding positions include Asn-108, Gln-115, and 132–134; that span reads VGN. Substrate-binding residues include Asn-134 and Arg-165. The Proton acceptor role is filled by His-190.

Belongs to the LDH/MDH superfamily. MDH type 2 family.

The enzyme catalyses (S)-malate + NAD(+) = oxaloacetate + NADH + H(+). Its function is as follows. Catalyzes the reversible oxidation of malate to oxaloacetate. The protein is Malate dehydrogenase of Polaromonas sp. (strain JS666 / ATCC BAA-500).